We begin with the raw amino-acid sequence, 340 residues long: Diacylglycerol acyltransferase/mycolyltransferase Ag85C (340 aa).

The first 45 residues, Met-1–Gly-45, serve as a signal peptide directing secretion. Leu-86–Arg-87 serves as a coordination point for substrate. A fibronectin-binding region spans residues Phe-102–Val-112. 2 residues coordinate substrate: Ser-170 and Asn-198. Ser-170 (nucleophile) is an active-site residue. Glu-274 is an active-site residue. Residues Leu-276–Arg-279 and His-306–Trp-308 contribute to the substrate site. Residue His-306 is part of the active site.

This sequence belongs to the mycobacterial A85 antigen family. As to quaternary structure, homodimer.

It localises to the secreted. It carries out the reaction an acyl-CoA + a 1,2-diacyl-sn-glycerol = a triacyl-sn-glycerol + CoA. The enzyme catalyses 2 alpha,alpha'-trehalose 6-mycolate = alpha,alpha'-trehalose 6,6'-bismycolate + alpha,alpha-trehalose. Functionally, the antigen 85 proteins (FbpA, FbpB, FbpC) are responsible for the high affinity of mycobacteria to fibronectin, a large adhesive glycoprotein, which facilitates the attachment of M.tuberculosis to murine alveolar macrophages (AMs). They also help to maintain the integrity of the cell wall by catalyzing the transfer of mycolic acids to cell wall arabinogalactan and through the synthesis of alpha,alpha-trehalose dimycolate (TDM, cord factor). They catalyze the transfer of a mycoloyl residue from one molecule of alpha,alpha-trehalose monomycolate (TMM) to another TMM, leading to the formation of TDM. The polypeptide is Diacylglycerol acyltransferase/mycolyltransferase Ag85C (fbpC) (Mycobacterium bovis (strain ATCC BAA-935 / AF2122/97)).